An 89-amino-acid polypeptide reads, in one-letter code: Small ribosomal subunit protein uS15 (89 aa).

It belongs to the universal ribosomal protein uS15 family. In terms of assembly, part of the 30S ribosomal subunit. Forms a bridge to the 50S subunit in the 70S ribosome, contacting the 23S rRNA.

In terms of biological role, one of the primary rRNA binding proteins, it binds directly to 16S rRNA where it helps nucleate assembly of the platform of the 30S subunit by binding and bridging several RNA helices of the 16S rRNA. Forms an intersubunit bridge (bridge B4) with the 23S rRNA of the 50S subunit in the ribosome. This chain is Small ribosomal subunit protein uS15, found in Streptococcus gordonii (strain Challis / ATCC 35105 / BCRC 15272 / CH1 / DL1 / V288).